Consider the following 284-residue polypeptide: Formamidopyrimidine-DNA glycosylase (284 aa).

Catalysis depends on Pro2, which acts as the Schiff-base intermediate with DNA. The active-site Proton donor is the Glu3. The Proton donor; for beta-elimination activity role is filled by Lys58. The DNA site is built by His101, Arg120, and Arg163. Residues 248–284 (RVYDRENAPCVTAGCPDVVRRVVQSGRSSFYCPSCQR) form an FPG-type zinc finger. Arg274 acts as the Proton donor; for delta-elimination activity in catalysis.

Belongs to the FPG family. As to quaternary structure, monomer. Zn(2+) serves as cofactor.

It carries out the reaction Hydrolysis of DNA containing ring-opened 7-methylguanine residues, releasing 2,6-diamino-4-hydroxy-5-(N-methyl)formamidopyrimidine.. The catalysed reaction is 2'-deoxyribonucleotide-(2'-deoxyribose 5'-phosphate)-2'-deoxyribonucleotide-DNA = a 3'-end 2'-deoxyribonucleotide-(2,3-dehydro-2,3-deoxyribose 5'-phosphate)-DNA + a 5'-end 5'-phospho-2'-deoxyribonucleoside-DNA + H(+). Involved in base excision repair of DNA damaged by oxidation or by mutagenic agents. Acts as a DNA glycosylase that recognizes and removes damaged bases. Has a preference for oxidized purines, such as 7,8-dihydro-8-oxoguanine (8-oxoG). Has AP (apurinic/apyrimidinic) lyase activity and introduces nicks in the DNA strand. Cleaves the DNA backbone by beta-delta elimination to generate a single-strand break at the site of the removed base with both 3'- and 5'-phosphates. The sequence is that of Formamidopyrimidine-DNA glycosylase from Dinoroseobacter shibae (strain DSM 16493 / NCIMB 14021 / DFL 12).